A 152-amino-acid polypeptide reads, in one-letter code: Transcriptional regulator MraZ (152 aa).

SpoVT-AbrB domains lie at 5–52 and 81–124; these read ATTL…PLPE and ADDC…NEDA.

This sequence belongs to the MraZ family. In terms of assembly, forms oligomers.

It is found in the cytoplasm. Its subcellular location is the nucleoid. The sequence is that of Transcriptional regulator MraZ from Idiomarina loihiensis (strain ATCC BAA-735 / DSM 15497 / L2-TR).